The sequence spans 184 residues: NADH-quinone oxidoreductase subunit B (184 aa).

The [4Fe-4S] cluster site is built by cysteine 63, cysteine 64, cysteine 128, and cysteine 158.

It belongs to the complex I 20 kDa subunit family. In terms of assembly, NDH-1 is composed of 14 different subunits. Subunits NuoB, C, D, E, F, and G constitute the peripheral sector of the complex. Requires [4Fe-4S] cluster as cofactor.

It is found in the cell inner membrane. The catalysed reaction is a quinone + NADH + 5 H(+)(in) = a quinol + NAD(+) + 4 H(+)(out). NDH-1 shuttles electrons from NADH, via FMN and iron-sulfur (Fe-S) centers, to quinones in the respiratory chain. The immediate electron acceptor for the enzyme in this species is believed to be ubiquinone. Couples the redox reaction to proton translocation (for every two electrons transferred, four hydrogen ions are translocated across the cytoplasmic membrane), and thus conserves the redox energy in a proton gradient. The protein is NADH-quinone oxidoreductase subunit B of Xylella fastidiosa (strain M23).